The sequence spans 270 residues: Interleukin-33 (270 aa).

Residues 1-65 (MKPKMKYSTN…EACYFRRETT (65 aa)) form a homeodomain-like HTH domain region. A propeptide spanning residues 1 to 94 (MKPKMKYSTN…CQQQSTVECF (94 aa)) is cleaved from the precursor. An interaction with RELA region spans residues 64 to 111 (TTKRPSLKTGRKHKRHLVLAACQQQSTVECFAFGISGVQKYTRALHDS).

The protein belongs to the IL-1 family. Highly divergent. Forms a 1:1:1 heterotrimeric complex with its primary high-affinity receptor IL1RL1 and the coreceptor IL1RAP. Interacts with cargo receptor TMED10; the interaction mediates the translocation from the cytoplasm into the ERGIC (endoplasmic reticulum-Golgi intermediate compartment) and thereby secretion. In terms of assembly, (Microbial infection) Interacts (in reduced form) with H.polygyrus ARI. In terms of processing, the full-length protein can be released from cells and is able to signal via the IL1RL1/ST2 receptor. However, proteolytic processing by CELA1, CSTG/cathepsin G and ELANE/neutrophil elastase produces C-terminal peptides that are more active than the unprocessed full length protein. May also be proteolytically processed by calpains. Proteolytic cleavage mediated by apoptotic caspases including CASP3 and CASP7 results in IL33 inactivation. In vitro proteolytic cleavage by CASP1 was reported but could not be confirmed in vivo suggesting that IL33 is probably not a direct substrate for that caspase. As to expression, expressed at high level in high endothelial venules found in tonsils, Peyer patches and mesenteric lymph nodes. Almost undetectable in placenta.

It localises to the nucleus. It is found in the chromosome. The protein localises to the cytoplasm. Its subcellular location is the cytoplasmic vesicle. The protein resides in the secretory vesicle. It localises to the secreted. Its function is as follows. Cytokine that binds to and signals through the IL1RL1/ST2 receptor which in turn activates NF-kappa-B and MAPK signaling pathways in target cells. Involved in the maturation of Th2 cells inducing the secretion of T-helper type 2-associated cytokines. Also involved in activation of mast cells, basophils, eosinophils and natural killer cells. Acts as an enhancer of polarization of alternatively activated macrophages. Acts as a chemoattractant for Th2 cells, and may function as an 'alarmin', that amplifies immune responses during tissue injury. Induces rapid UCP2-dependent mitochondrial rewiring that attenuates the generation of reactive oxygen species and preserves the integrity of Krebs cycle required for persistent production of itaconate and subsequent GATA3-dependent differentiation of inflammation-resolving alternatively activated macrophages. In terms of biological role, in quiescent endothelia the uncleaved form is constitutively and abundantly expressed, and acts as a chromatin-associated nuclear factor with transcriptional repressor properties, it may sequester nuclear NF-kappaB/RELA, lowering expression of its targets. This form is rapidely lost upon angiogenic or pro-inflammatory activation. This chain is Interleukin-33, found in Homo sapiens (Human).